Reading from the N-terminus, the 559-residue chain is Leucine-rich repeat protein soc-2 (559 aa).

Over residues 1-17 (METSKEFEFRPAKETSR) the composition is skewed to basic and acidic residues. Positions 1-55 (METSKEFEFRPAKETSRSKSPGGIVGRLSNFARNKARHSLSEKGSNSVGGSGGSG) are disordered. LRR repeat units follow at residues 74–95 (QDQRLDLSSIEITSIPSPIKEL), 97–118 (QLTELFLYKNKLTCLPTEIGQL), 120–141 (NLKKLGLSENALSSLPDSLSSL), 143–164 (SLETLDLRHNKLTEVPAVIYKI), 166–187 (SLETLWLRYNRIVAVDEQIGNL), 189–210 (KLKMLDVRENKIRELPSAIGKL), 212–233 (SLVVCLVSYNHLTRVPEEIGEC), 235–257 (ALTQLDLQHNDLSELPYSIGKLT), 258–279 (NLVRIGIRYNKIRCIPSELESC), 281–302 (QLEEFIVESNHLQLLPPNLLTM), 305–326 (KIHTVNLSRNELTAFPAGGPQQ), 329–350 (PTVTINMEHNQISKIPIGIFSK), 353–374 (RLTKLNLKENELVSLPLDMGSW), 376–397 (SITELNLSTNQLKVLPEDIEKL), 399–420 (NLEILVLSNNQLKKLPNQIGNL), 422–443 (KLRELDLEENELETVPTEIGFL), 445–466 (HLTKLWVQSNKIVTLPRSIGNL), 468–489 (SLQDLRLGENNLTAIPEEIGHL), 491–513 (SLKSLYLNDNSSLHNLPFELALC), and 515–536 (SLEIMSIENSPLSQIPPEITAG).

It belongs to the SHOC2 family. As to quaternary structure, interacts with let-60.

Its function is as follows. Acts as a Ras effector and participates in MAPK pathway activation. Probably acts as a scaffolding protein in a protein phosphatase complex that specifically dephosphorylates Raf kinase and stimulates Raf activity at specialized signaling complexes upon Ras activation. Required for vulval development. Involved in fluid homeostasis. Plays a role in nicotinic acetylcholine receptor (nAChR)-mediated sensitivity to nicotine. In Caenorhabditis briggsae, this protein is Leucine-rich repeat protein soc-2 (soc-2).